Here is a 69-residue protein sequence, read N- to C-terminus: Guanine nucleotide-binding protein G(I)/G(S)/G(O) subunit gamma-T2 (69 aa).

Cysteine 66 is modified (cysteine methyl ester). Cysteine 66 carries S-farnesyl cysteine lipidation. A propeptide spans 67-69 (IIS) (removed in mature form).

This sequence belongs to the G protein gamma family. As to quaternary structure, g proteins are composed of 3 units, alpha, beta and gamma.

The protein localises to the cell membrane. Guanine nucleotide-binding proteins (G proteins) are involved as a modulator or transducer in various transmembrane signaling systems. The beta and gamma chains are required for the GTPase activity, for replacement of GDP by GTP, and for G protein-effector interaction. This chain is Guanine nucleotide-binding protein G(I)/G(S)/G(O) subunit gamma-T2 (GNGT2), found in Bos taurus (Bovine).